The primary structure comprises 273 residues: Protein E6 (273 aa).

2 zinc fingers span residues 27-63 (CIFC…CRDC) and 100-140 (CTVC…CSSC).

The protein belongs to the papillomaviridae E6 protein family. As to quaternary structure, forms homodimers. Interacts with ubiquitin-protein ligase UBE3A/E6-AP; this interaction stimulates UBE3A ubiquitin activity. Interacts with host BAK1.

The protein localises to the host cytoplasm. Its subcellular location is the host nucleus. In terms of biological role, plays a major role in the induction and maintenance of cellular transformation. E6 associates with host UBE3A/E6-AP ubiquitin-protein ligase and modulates its activity. Protects host keratinocytes from apoptosis by mediating the degradation of host BAK1. May also inhibit host immune response. In Sylvilagus floridanus (Cottontail rabbit), this protein is Protein E6.